Consider the following 195-residue polypeptide: Molybdenum cofactor guanylyltransferase (195 aa).

Residues 10-12 (LAG), Lys23, Asn51, Asp69, and Asp99 contribute to the GTP site. Position 99 (Asp99) interacts with Mg(2+).

This sequence belongs to the MobA family. In terms of assembly, monomer. The cofactor is Mg(2+).

It is found in the cytoplasm. It carries out the reaction Mo-molybdopterin + GTP + H(+) = Mo-molybdopterin guanine dinucleotide + diphosphate. Transfers a GMP moiety from GTP to Mo-molybdopterin (Mo-MPT) cofactor (Moco or molybdenum cofactor) to form Mo-molybdopterin guanine dinucleotide (Mo-MGD) cofactor. In Yersinia pseudotuberculosis serotype O:1b (strain IP 31758), this protein is Molybdenum cofactor guanylyltransferase.